A 300-amino-acid chain; its full sequence is Ribosomal protein L11 methyltransferase (300 aa).

Thr152, Gly173, Asp195, and Asn234 together coordinate S-adenosyl-L-methionine.

It belongs to the methyltransferase superfamily. PrmA family.

The protein resides in the cytoplasm. It carries out the reaction L-lysyl-[protein] + 3 S-adenosyl-L-methionine = N(6),N(6),N(6)-trimethyl-L-lysyl-[protein] + 3 S-adenosyl-L-homocysteine + 3 H(+). Functionally, methylates ribosomal protein L11. In Burkholderia vietnamiensis (strain G4 / LMG 22486) (Burkholderia cepacia (strain R1808)), this protein is Ribosomal protein L11 methyltransferase.